We begin with the raw amino-acid sequence, 664 residues long: L-type lectin-domain containing receptor kinase I.3 (664 aa).

The N-terminal stretch at 1–21 is a signal peptide; that stretch reads MACRLYLALIFSCVYLICLSS. Topologically, residues 22 to 286 are extracellular; sequence QQETGFVYNG…PKEEKKKLSP (265 aa). The segment at 24–257 is legume-lectin like; that stretch reads ETGFVYNGFE…NHYILGWSFS (234 aa). N-linked (GlcNAc...) asparagine glycans are attached at residues N55, N125, N128, N181, N204, N225, and N267. Residues 287 to 307 form a helical membrane-spanning segment; it reads LLIGLVILLVIPVVMVLGGVY. Residues 308–664 are Cytoplasmic-facing; the sequence is WYRRKKYAEV…THTILDGHGR (357 aa). The Protein kinase domain occupies 342–619; the sequence is FRKDCRVGKG…LNQDLPLPIF (278 aa). ATP is bound by residues 348–356 and K370; that span reads VGKGGFGEV. The active-site Proton acceptor is the D466.

In the C-terminal section; belongs to the protein kinase superfamily. Ser/Thr protein kinase family. It in the N-terminal section; belongs to the leguminous lectin family. Autophosphorylated on Ser and Thr residues. As to expression, mostly expressed in roots and flowers, and, to a lower extent, in leaves.

The protein localises to the cell membrane. It carries out the reaction L-seryl-[protein] + ATP = O-phospho-L-seryl-[protein] + ADP + H(+). It catalyses the reaction L-threonyl-[protein] + ATP = O-phospho-L-threonyl-[protein] + ADP + H(+). Its function is as follows. Involved in resistance response to the pathogenic fungus Alternaria brassicicola. In Arabidopsis thaliana (Mouse-ear cress), this protein is L-type lectin-domain containing receptor kinase I.3.